The primary structure comprises 396 residues: Lipid-A-disaccharide synthase (396 aa).

The protein belongs to the LpxB family.

It catalyses the reaction a lipid X + a UDP-2-N,3-O-bis[(3R)-3-hydroxyacyl]-alpha-D-glucosamine = a lipid A disaccharide + UDP + H(+). It participates in bacterial outer membrane biogenesis; LPS lipid A biosynthesis. Functionally, condensation of UDP-2,3-diacylglucosamine and 2,3-diacylglucosamine-1-phosphate to form lipid A disaccharide, a precursor of lipid A, a phosphorylated glycolipid that anchors the lipopolysaccharide to the outer membrane of the cell. The chain is Lipid-A-disaccharide synthase from Nitrobacter winogradskyi (strain ATCC 25391 / DSM 10237 / CIP 104748 / NCIMB 11846 / Nb-255).